The following is a 408-amino-acid chain: MSTIIFGVVMFTLIILALVLVILFAKSKLVPTGDITISINGDPEKAIVTQPGGKLLTALAGAGVFVSSACGGGGSCGQCRVKIKSGGGDILPTELDHISKGEAREGERLACQVAVKADMDLELPEEIFGVKKWECTVISNDNKATFIKELKLAIPDGESVPFRAGGYIQIEAPAHHVKYADFDVPEKYRGDWDKFNLFRYESKVDEPIIRAYSMANYPEEFGIIMLNVRIATPPPNNPNVPPGQMSSYIWSLKAGDKCTISGPFGEFFAKDTDAEMVFIGGGAGMAPMRSHIFDQLKRLKSKRKMSYWYGARSKREMFYVEDFDGLAAENDNFVWHCALSDPQPEDNWTGYTGFIHNVLYENYLKDHEAPEDCEYYMCGPPMMNAAVINMLKNLGVEEENILLDDFGG.

A helical transmembrane segment spans residues 4 to 24 (IIFGVVMFTLIILALVLVILF). The region spanning 33-127 (GDITISINGD…DMDLELPEEI (95 aa)) is the 2Fe-2S ferredoxin-type domain. [2Fe-2S] cluster is bound by residues Cys70, Cys76, Cys79, and Cys111. An FAD-binding FR-type domain is found at 130–270 (VKKWECTVIS…SGPFGEFFAK (141 aa)).

Belongs to the NqrF family. In terms of assembly, composed of six subunits; NqrA, NqrB, NqrC, NqrD, NqrE and NqrF. [2Fe-2S] cluster is required as a cofactor. Requires FAD as cofactor.

Its subcellular location is the cell inner membrane. It catalyses the reaction a ubiquinone + n Na(+)(in) + NADH + H(+) = a ubiquinol + n Na(+)(out) + NAD(+). Functionally, NQR complex catalyzes the reduction of ubiquinone-1 to ubiquinol by two successive reactions, coupled with the transport of Na(+) ions from the cytoplasm to the periplasm. The first step is catalyzed by NqrF, which accepts electrons from NADH and reduces ubiquinone-1 to ubisemiquinone by a one-electron transfer pathway. This Vibrio cholerae serotype O1 (strain ATCC 39541 / Classical Ogawa 395 / O395) protein is Na(+)-translocating NADH-quinone reductase subunit F.